The chain runs to 130 residues: Fluoride-specific ion channel FluC (130 aa).

4 consecutive transmembrane segments (helical) span residues 4–24 (MINV…RYFI), 35–55 (GFPI…GLLT), 68–88 (LNLF…TFSL), and 99–119 (AVFG…GVVL). Na(+)-binding residues include glycine 78 and threonine 81.

Belongs to the fluoride channel Fluc/FEX (TC 1.A.43) family.

It is found in the cell membrane. The catalysed reaction is fluoride(in) = fluoride(out). Na(+) is not transported, but it plays an essential structural role and its presence is essential for fluoride channel function. Fluoride-specific ion channel. Important for reducing fluoride concentration in the cell, thus reducing its toxicity. This is Fluoride-specific ion channel FluC from Ruminiclostridium cellulolyticum (strain ATCC 35319 / DSM 5812 / JCM 6584 / H10) (Clostridium cellulolyticum).